The primary structure comprises 471 residues: Tyrosine--tRNA ligase (471 aa).

Tyr-41 is a binding site for L-tyrosine. Residues 46–55 (PTAPSLHVGN) carry the 'HIGH' region motif. The L-tyrosine site is built by Tyr-176 and Gln-180. A 'KMSKS' region motif is present at residues 236-240 (KFGKT). Residue Lys-239 coordinates ATP. One can recognise an S4 RNA-binding domain in the interval 403–471 (DLITHILQKV…GKKHLAAVFY (69 aa)).

Belongs to the class-I aminoacyl-tRNA synthetase family. TyrS type 1 subfamily. In terms of assembly, homodimer.

It is found in the cytoplasm. The enzyme catalyses tRNA(Tyr) + L-tyrosine + ATP = L-tyrosyl-tRNA(Tyr) + AMP + diphosphate + H(+). In terms of biological role, catalyzes the attachment of tyrosine to tRNA(Tyr) in a two-step reaction: tyrosine is first activated by ATP to form Tyr-AMP and then transferred to the acceptor end of tRNA(Tyr). This is Tyrosine--tRNA ligase from Tropheryma whipplei (strain Twist) (Whipple's bacillus).